We begin with the raw amino-acid sequence, 819 residues long: Deubiquitinase MYSM1 (819 aa).

Acidic residues predominate over residues 1-12; the sequence is MEAEEADVDVEG. The segment at 1-29 is disordered; it reads MEAEEADVDVEGDVAAAAQPGNDESTASV. Serine 107 is subject to Phosphoserine. Residues 113-164 enclose the SANT domain; sequence SHSVKWTVEEKELFEQGLAKFGRRWTKIATLLKSRTVLQVKSYARQYFKNKV. Lysine 184 participates in a covalent cross-link: Glycyl lysine isopeptide (Lys-Gly) (interchain with G-Cter in SUMO2). Serine 215 is modified (phosphoserine). Disordered regions lie at residues 228–247, 260–279, and 318–347; these read ELTS…DVPN, QEGP…KQGE, and LHRG…NEML. Residues 230 to 240 show a composition bias toward polar residues; sequence TSQTSQNSGSH. Threonine 233 carries the post-translational modification Phosphothreonine. The segment covering 318–340 has biased composition (basic and acidic residues); the sequence is LHRGEVREEAKHSPSPEPCERQD. Serine 332 bears the Phosphoserine mark. Positions 363-461 constitute an SWIRM domain; the sequence is LKPPEQEVEI…FGCEQAVYNR (99 aa). An MPN domain is found at 568–700; sequence VKVAAEALLI…PLPYSQITCL (133 aa). Histidine 647, histidine 649, and aspartate 660 together coordinate Zn(2+). A JAMM motif motif is present at residues 647–660; that stretch reads HSHPAFDPNPSLRD. The short motif at 765-769 is the LXXLL motif element; it reads LQKLL.

It belongs to the peptidase M67A family. MYSM1 subfamily. Component of a large chromatin remodeling complex, at least composed of MYSM1, PCAF, RBM10 and KIF11/TRIP5. Binds histones.

Its subcellular location is the nucleus. It localises to the cytoplasm. Metalloprotease with deubiquitinase activity that plays important regulator roles in hematopoietic stem cell function, blood cell production and immune response. Participates in the normal programming of B-cell responses to antigen after the maturation process. Within the cytoplasm, plays critical roles in the repression of innate immunity and autoimmunity. Removes 'Lys-63'-linked polyubiquitins from TRAF3 and TRAF6 complexes. Attenuates NOD2-mediated inflammation and tissue injury by promoting 'Lys-63'-linked deubiquitination of RIPK2 component. Suppresses the CGAS-STING1 signaling pathway by cleaving STING1 'Lys-63'-linked ubiquitin chains. In the nucleus, acts as a hematopoietic transcription regulator derepressing a range of genes essential for normal stem cell differentiation including EBF1 and PAX5 in B-cells, ID2 in NK-cell progenitor or FLT3 in dendritic cell precursors. Deubiquitinates monoubiquitinated histone H2A, a specific tag for epigenetic transcriptional repression, leading to dissociation of histone H1 from the nucleosome. The protein is Deubiquitinase MYSM1 (Mysm1) of Mus musculus (Mouse).